A 113-amino-acid chain; its full sequence is U11-theraphotoxin-Hhn1o (113 aa).

An N-terminal signal peptide occupies residues 1–21 (MNTVRVTFLLVFVLAVSLGQA). Residues 22–74 (DKDENRMEMQEKTEQGKSYLDFAENLLLQKLEELEAKLLEEDSEESRNSRQKR) constitute a propeptide that is removed on maturation. Residues 61 to 83 (EEDSEESRNSRQKRCIGEGVPCD) form a disordered region. 2 disulfides stabilise this stretch: C75–C90 and C82–C95.

This sequence belongs to the neurotoxin 14 (magi-1) family. 01 (HNTX-16) subfamily. As to expression, expressed by the venom gland.

It is found in the secreted. In terms of biological role, probable ion channel inhibitor. The chain is U11-theraphotoxin-Hhn1o from Cyriopagopus hainanus (Chinese bird spider).